The following is a 287-amino-acid chain: Lycopene elongase/hydratase (287 aa).

7 consecutive transmembrane segments (helical) span residues 15–35 (ISWI…AGEI), 37–57 (WLFW…MYGI), 87–107 (TLLW…FIFG), 137–157 (FIDA…GATI), 166–186 (MWIA…LGAV), 218–238 (LLAA…GIAI), and 265–285 (VFLW…IAIH).

This sequence belongs to the UbiA prenyltransferase family.

It localises to the cell membrane. It catalyses the reaction all-trans-lycopene + dimethylallyl diphosphate + A + H2O = nonaflavuxanthin + AH2 + diphosphate. The catalysed reaction is nonaflavuxanthin + dimethylallyl diphosphate + A + H2O = flavuxanthin + AH2 + diphosphate. It functions in the pathway carotenoid biosynthesis. Its function is as follows. Catalyzes the elongation of the C(40) carotenoid all-trans-lycopene to the acyclic C(50) carotenoid flavuxanthin during decaprenoxanthin biosynthesis. Acts as a bifunctional enzyme that catalyzes the elongation of lycopene by attaching a C(5) isoprene unit at C-2, as well as the hydroxylation of the new isoprene unit. The enzyme acts at both ends of the substrate, forming the C(50) carotenoid flavuxanthin via the C(45) intermediate nonaflavuxanthin. The protein is Lycopene elongase/hydratase of Corynebacterium glutamicum (strain ATCC 13032 / DSM 20300 / JCM 1318 / BCRC 11384 / CCUG 27702 / LMG 3730 / NBRC 12168 / NCIMB 10025 / NRRL B-2784 / 534).